Consider the following 197-residue polypeptide: Female-specific protein transformer (197 aa).

Basic and acidic residues-rich tracts occupy residues 1-17 (MKMDADSSGTQHRDSRG) and 24-39 (REREYHGRSSERDSRK). 2 disordered regions span residues 1 to 136 (MKMD…PKII) and 158 to 197 (GYQRLPRPPPFPPAPYRYRQRPPFIGVPRFGYRNAGRPPY). 2 stretches are compositionally biased toward basic residues: residues 58–75 (RRLRQRAHQSTRRTRSRS) and 84–127 (SRHR…RSPH). A compositionally biased stretch (pro residues) spans 163 to 172 (PRPPPFPPAP).

The protein localises to the nucleus speckle. In terms of biological role, member of the regulatory pathway controlling female somatic sexual differentiation, regulated by Sxl. Activates dsx female-specific splicing by promoting the formation of a splicing enhancer complex which consists of tra, tra2 and sr proteins. Together with tra-2, plays a role in switching fru splicing from the male-specific pattern to the female-specific pattern through activation of the female-specific fru 5'-splice site. No known function in males. The polypeptide is Female-specific protein transformer (tra) (Drosophila melanogaster (Fruit fly)).